Consider the following 121-residue polypeptide: Large ribosomal subunit protein bL12 (121 aa).

The protein belongs to the bacterial ribosomal protein bL12 family. Homodimer. Part of the ribosomal stalk of the 50S ribosomal subunit. Forms a multimeric L10(L12)X complex, where L10 forms an elongated spine to which 2 to 4 L12 dimers bind in a sequential fashion. Binds GTP-bound translation factors.

Functionally, forms part of the ribosomal stalk which helps the ribosome interact with GTP-bound translation factors. Is thus essential for accurate translation. This chain is Large ribosomal subunit protein bL12, found in Shewanella halifaxensis (strain HAW-EB4).